The primary structure comprises 91 residues: Small integral membrane protein 12-A (91 aa).

A helical membrane pass occupies residues 12-34; that stretch reads YAPYITFPVAFVVGAVGYQLEWF.

The protein belongs to the SMIM12 family.

It is found in the membrane. This is Small integral membrane protein 12-A (smim12-a) from Xenopus laevis (African clawed frog).